The primary structure comprises 489 residues: Probable apyrase 1 (489 aa).

The Cytoplasmic segment spans residues 1–28; it reads MRRFSAAAGARQQQQQGEAVSDRVLRFR. The chain crosses the membrane as a helical; Signal-anchor for type II membrane protein span at residues 29-49; it reads GVLVVVLAPVLLISLVLLLMP. Residues 50–489 are Extracellular-facing; sequence RAPASATVEG…GSAIEVASSS (440 aa). 89–99 lines the ATP pocket; that stretch reads VIFDAGSSGSR. Glu-211 acts as the Proton acceptor in catalysis. 235–245 lines the ATP pocket; the sequence is GVVDLGGGSVQ.

It belongs to the GDA1/CD39 NTPase family. Ca(2+) is required as a cofactor.

Its subcellular location is the membrane. The catalysed reaction is a ribonucleoside 5'-triphosphate + 2 H2O = a ribonucleoside 5'-phosphate + 2 phosphate + 2 H(+). Functionally, catalyzes the hydrolysis of phosphoanhydride bonds of nucleoside tri- and di-phosphates. This chain is Probable apyrase 1 (APY1), found in Oryza sativa subsp. japonica (Rice).